The chain runs to 877 residues: GPI ethanolamine phosphate transferase 2 (877 aa).

N190 and N368 each carry an N-linked (GlcNAc...) asparagine glycan. Helical transmembrane passes span 409–429, 443–463, 464–484, 528–548, and 570–590; these read VDIYIGLSILVAMAIVAFGLF, YNWYFIGISIVYSIHFHASSL, IEEEYQIWWFFSIICLFALYF, VDLLWVLNIATYFLTAILIYS, and DFGSLVTFIVTFVTCSISFSF. Residue N611 is glycosylated (N-linked (GlcNAc...) asparagine). 6 helical membrane passes run 634–654, 683–703, 716–736, 758–778, 817–837, and 854–876; these read IHLSKILFYCIGVLIIVRIVL, EIVPIFLIFSLVKFSAAKLLA, LMIIITLFSLCMQNLSFFSMG, VFLVGVLTYCSNFAGPIFWSL, LAGFLFYSMAGLSLVASCFNL, and FASWTLLTNILIDTISSLSILAL.

It belongs to the PIGG/PIGN/PIGO family. PIGG subfamily.

It is found in the endoplasmic reticulum membrane. It participates in glycolipid biosynthesis; glycosylphosphatidylinositol-anchor biosynthesis. Its function is as follows. Ethanolamine phosphate transferase involved in glycosylphosphatidylinositol-anchor biosynthesis. Transfers ethanolamine phosphate to the GPI second mannose. The chain is GPI ethanolamine phosphate transferase 2 (LAS21) from Debaryomyces hansenii (strain ATCC 36239 / CBS 767 / BCRC 21394 / JCM 1990 / NBRC 0083 / IGC 2968) (Yeast).